Reading from the N-terminus, the 191-residue chain is Adenylate kinase (191 aa).

12–17 serves as a coordination point for ATP; that stretch reads GSGKTT. Residues 33–62 form an NMP region; that stretch reads STGDLLRAEVASGSELGKLIDSFISKGNLV. Residues threonine 34, arginine 39, 60–62, 87–90, and glutamine 94 each bind AMP; these read NLV and GYPR. The interval 129–135 is LID; sequence GRARGAD. Arginine 130 is an ATP binding site. Residues arginine 132 and arginine 144 each contribute to the AMP site. Arginine 172 provides a ligand contact to ATP.

It belongs to the adenylate kinase family. Monomer.

Its subcellular location is the cytoplasm. The enzyme catalyses AMP + ATP = 2 ADP. It participates in purine metabolism; AMP biosynthesis via salvage pathway; AMP from ADP: step 1/1. In terms of biological role, catalyzes the reversible transfer of the terminal phosphate group between ATP and AMP. Plays an important role in cellular energy homeostasis and in adenine nucleotide metabolism. This Campylobacter fetus subsp. fetus (strain 82-40) protein is Adenylate kinase.